The primary structure comprises 120 residues: Large ribosomal subunit protein uL18 (120 aa).

The protein belongs to the universal ribosomal protein uL18 family. In terms of assembly, part of the 50S ribosomal subunit; part of the 5S rRNA/L5/L18/L25 subcomplex. Contacts the 5S and 23S rRNAs.

This is one of the proteins that bind and probably mediate the attachment of the 5S RNA into the large ribosomal subunit, where it forms part of the central protuberance. The chain is Large ribosomal subunit protein uL18 from Brucella abortus (strain S19).